The primary structure comprises 416 residues: D-amino acid dehydrogenase (416 aa).

Position 3–17 (3–17 (VIVLGAGIIGVTSAY)) interacts with FAD.

The protein belongs to the DadA oxidoreductase family. Requires FAD as cofactor.

The catalysed reaction is a D-alpha-amino acid + A + H2O = a 2-oxocarboxylate + AH2 + NH4(+). The protein operates within amino-acid degradation; D-alanine degradation; NH(3) and pyruvate from D-alanine: step 1/1. Functionally, oxidative deamination of D-amino acids. The polypeptide is D-amino acid dehydrogenase (Sinorhizobium medicae (strain WSM419) (Ensifer medicae)).